The chain runs to 389 residues: S-adenosylmethionine synthase (389 aa).

Histidine 16 contacts ATP. Residue aspartate 18 participates in Mg(2+) binding. Residue glutamate 44 participates in K(+) binding. The L-methionine site is built by glutamate 57 and glutamine 100. The flexible loop stretch occupies residues 100 to 110 (QSPDIAQGVDE). ATP contacts are provided by residues 167-169 (DAK), 233-234 (RF), aspartate 242, 248-249 (RK), alanine 265, and lysine 269. Aspartate 242 serves as a coordination point for L-methionine. Lysine 273 contacts L-methionine.

The protein belongs to the AdoMet synthase family. In terms of assembly, homotetramer; dimer of dimers. It depends on Mg(2+) as a cofactor. Requires K(+) as cofactor.

Its subcellular location is the cytoplasm. It carries out the reaction L-methionine + ATP + H2O = S-adenosyl-L-methionine + phosphate + diphosphate. It participates in amino-acid biosynthesis; S-adenosyl-L-methionine biosynthesis; S-adenosyl-L-methionine from L-methionine: step 1/1. In terms of biological role, catalyzes the formation of S-adenosylmethionine (AdoMet) from methionine and ATP. The overall synthetic reaction is composed of two sequential steps, AdoMet formation and the subsequent tripolyphosphate hydrolysis which occurs prior to release of AdoMet from the enzyme. This Acidithiobacillus ferrooxidans (strain ATCC 23270 / DSM 14882 / CIP 104768 / NCIMB 8455) (Ferrobacillus ferrooxidans (strain ATCC 23270)) protein is S-adenosylmethionine synthase.